The sequence spans 156 residues: 2-C-methyl-D-erythritol 2,4-cyclodiphosphate synthase (156 aa).

The a divalent metal cation site is built by Asp10 and His12. 4-CDP-2-C-methyl-D-erythritol 2-phosphate-binding positions include 10-12 and 36-37; these read DSH and HS. His44 is a binding site for a divalent metal cation. Residues 58-60 and 63-67 contribute to the 4-CDP-2-C-methyl-D-erythritol 2-phosphate site; these read DIG and FKDTD.

It belongs to the IspF family. In terms of assembly, homotrimer. A divalent metal cation is required as a cofactor.

It catalyses the reaction 4-CDP-2-C-methyl-D-erythritol 2-phosphate = 2-C-methyl-D-erythritol 2,4-cyclic diphosphate + CMP. It functions in the pathway isoprenoid biosynthesis; isopentenyl diphosphate biosynthesis via DXP pathway; isopentenyl diphosphate from 1-deoxy-D-xylulose 5-phosphate: step 4/6. Involved in the biosynthesis of isopentenyl diphosphate (IPP) and dimethylallyl diphosphate (DMAPP), two major building blocks of isoprenoid compounds. Catalyzes the conversion of 4-diphosphocytidyl-2-C-methyl-D-erythritol 2-phosphate (CDP-ME2P) to 2-C-methyl-D-erythritol 2,4-cyclodiphosphate (ME-CPP) with a corresponding release of cytidine 5-monophosphate (CMP). In Aquifex aeolicus (strain VF5), this protein is 2-C-methyl-D-erythritol 2,4-cyclodiphosphate synthase.